A 494-amino-acid polypeptide reads, in one-letter code: Adenosylhomocysteinase (494 aa).

The substrate site is built by threonine 72, aspartate 155, and glutamate 217. 218 to 220 (TTT) provides a ligand contact to NAD(+). Residues lysine 247 and aspartate 251 each contribute to the substrate site. NAD(+)-binding positions include asparagine 252, 281 to 286 (GYGDVG), glutamate 304, asparagine 339, 360 to 362 (IGH), and asparagine 408.

This sequence belongs to the adenosylhomocysteinase family. Requires NAD(+) as cofactor.

Its subcellular location is the cytoplasm. It catalyses the reaction S-adenosyl-L-homocysteine + H2O = L-homocysteine + adenosine. It functions in the pathway amino-acid biosynthesis; L-homocysteine biosynthesis; L-homocysteine from S-adenosyl-L-homocysteine: step 1/1. May play a key role in the regulation of the intracellular concentration of adenosylhomocysteine. The sequence is that of Adenosylhomocysteinase from Nocardia farcinica (strain IFM 10152).